Consider the following 844-residue polypeptide: 3',5'-cyclic-AMP phosphodiesterase 4A (844 aa).

Residues 1–124 (MEPPAAPSER…RSPLDSQASP (124 aa)) form a disordered region. A Phosphoserine modification is found at Ser-13. Residues 36 to 46 (QPRTPIRIQQR) show a composition bias toward low complexity. Positions 51-78 (SAERSETERSPHRPIERADAVDTGDRPG) are enriched in basic and acidic residues. Residues 82–91 (TRMSWPSSFH) are compositionally biased toward polar residues. Ser-147 carries the post-translational modification Phosphoserine; by MAPKAPK2. 3 positions are modified to phosphoserine: Ser-152, Ser-160, and Ser-204. A disordered region spans residues 296–317 (PSPTPRQRAFQQPPPSVLRQSQ). Ser-333 carries the phosphoserine modification. One can recognise a PDEase domain in the interval 343–672 (VKTDQEDLLA…DWYHSAIRQS (330 aa)). Lys-344 participates in a covalent cross-link: Glycyl lysine isopeptide (Lys-Gly) (interchain with G-Cter in SUMO). His-419 functions as the Proton donor in the catalytic mechanism. His-419 contributes to the 3',5'-cyclic AMP binding site. Residues His-419 and His-423 each coordinate AMP. The Zn(2+) site is built by His-423, His-459, Asp-460, and Asp-577. Positions 460, 577, 628, and 631 each coordinate AMP. Residue Asp-460 participates in Mg(2+) binding. A Mn(2+)-binding site is contributed by Asp-460. Gln-628 and Phe-631 together coordinate 3',5'-cyclic AMP. Disordered regions lie at residues 668–690 (AIRQ…PSLP) and 818–844 (SACS…GDPA). A phosphoserine mark is found at Ser-672 and Ser-674. The segment covering 820-830 (CSGTSGDNSAI) has biased composition (polar residues).

This sequence belongs to the cyclic nucleotide phosphodiesterase family. PDE4 subfamily. As to quaternary structure, interacts with LYN (via SH3 domain). Interacts with ARRB2. Zn(2+) is required as a cofactor. Requires Mg(2+) as cofactor. Mn(2+) serves as cofactor. Post-translationally, phosphorylated by MAPKAPK2 at Ser-147; it counteracts PKA-induced activation of PDE4A and modulates intracellular cAMP levels. Likely involved in cellular desensitization to cAMP signaling. In terms of processing, proteolytically cleaved by CASP3. In terms of tissue distribution, isoform 2 is testis specific.

The protein localises to the cytoplasm. The protein resides in the cytosol. It localises to the membrane. The enzyme catalyses 3',5'-cyclic AMP + H2O = AMP + H(+). Its pathway is purine metabolism; 3',5'-cyclic AMP degradation; AMP from 3',5'-cyclic AMP: step 1/1. With respect to regulation, inhibited by rolipram. In terms of biological role, hydrolyzes the second messenger 3',5'-cyclic AMP (cAMP), which is a key regulator of many important physiological processes. Its function is as follows. Efficiently hydrolyzes cAMP. This is 3',5'-cyclic-AMP phosphodiesterase 4A (Pde4a) from Rattus norvegicus (Rat).